We begin with the raw amino-acid sequence, 141 residues long: MALSLSGLILPKLMQQRAFSVSSAVSAIQKLTRVRVVDNSTLGNAHHHRPPKVIHVYNKNGVGKVGDRVLLAIKGQKKKAIIVGHKMPGARMTPRFDSNNVVLIEDNGNPTGTRIKAPLPTHLRKLEGEYSKLLAIAQRFV.

The transit peptide at M1 to F19 directs the protein to the mitochondrion.

It belongs to the universal ribosomal protein uL14 family. In terms of assembly, component of the mitochondrial ribosome large subunit (39S) which comprises a 16S rRNA and about 50 distinct proteins. Interacts with MALSU1.

It is found in the mitochondrion. Its function is as follows. May form part of 2 intersubunit bridges in the assembled ribosome. Upon binding to MALSU1, intersubunit bridge formation is blocked, preventing ribosome formation and repressing translation. The protein is Large ribosomal subunit protein uL14m (mrpl14) of Danio rerio (Zebrafish).